The chain runs to 432 residues: Trigger factor (432 aa).

Positions 162-247 (GDLVKFDYQG…VKEVQAPVLP (86 aa)) constitute a PPIase FKBP-type domain.

Belongs to the FKBP-type PPIase family. Tig subfamily.

It localises to the cytoplasm. It carries out the reaction [protein]-peptidylproline (omega=180) = [protein]-peptidylproline (omega=0). Functionally, involved in protein export. Acts as a chaperone by maintaining the newly synthesized protein in an open conformation. Functions as a peptidyl-prolyl cis-trans isomerase. The sequence is that of Trigger factor from Thiobacillus denitrificans (strain ATCC 25259 / T1).